Consider the following 484-residue polypeptide: tRNA sulfurtransferase (484 aa).

Residues 63-167 (REMIERLTCT…LDRLFVIHRQ (105 aa)) form the THUMP domain. Residues 185-186 (LM), Lys267, Gly289, and Gln298 contribute to the ATP site. Cys346 and Cys457 form a disulfide bridge. One can recognise a Rhodanese domain in the interval 405–483 (VLPGQIVIDI…GHTNVRVYRP (79 aa)). The Cysteine persulfide intermediate role is filled by Cys457.

The protein belongs to the ThiI family.

It localises to the cytoplasm. It carries out the reaction [ThiI sulfur-carrier protein]-S-sulfanyl-L-cysteine + a uridine in tRNA + 2 reduced [2Fe-2S]-[ferredoxin] + ATP + H(+) = [ThiI sulfur-carrier protein]-L-cysteine + a 4-thiouridine in tRNA + 2 oxidized [2Fe-2S]-[ferredoxin] + AMP + diphosphate. It catalyses the reaction [ThiS sulfur-carrier protein]-C-terminal Gly-Gly-AMP + S-sulfanyl-L-cysteinyl-[cysteine desulfurase] + AH2 = [ThiS sulfur-carrier protein]-C-terminal-Gly-aminoethanethioate + L-cysteinyl-[cysteine desulfurase] + A + AMP + 2 H(+). It functions in the pathway cofactor biosynthesis; thiamine diphosphate biosynthesis. Catalyzes the ATP-dependent transfer of a sulfur to tRNA to produce 4-thiouridine in position 8 of tRNAs, which functions as a near-UV photosensor. Also catalyzes the transfer of sulfur to the sulfur carrier protein ThiS, forming ThiS-thiocarboxylate. This is a step in the synthesis of thiazole, in the thiamine biosynthesis pathway. The sulfur is donated as persulfide by IscS. The sequence is that of tRNA sulfurtransferase from Pseudomonas aeruginosa (strain LESB58).